A 567-amino-acid chain; its full sequence is MSQEYDYIIVGAGSAGNTLATRLTEDEGVTVLLLEAGGPDYRLDFRTQMPAALAFPLQGRRYNWAYETDPEPHMDGRRMECGRGKGLGGSSLINGMCYIRGNAMDYDNWAKLPGLENWTYLDCLPYFRKAETRDIGPNDYHGGEGPVSVTTPKAGNNPLFHAMVEAGVQAGYPRTDDLNGYQQEGFGPMDRTVTKNGRRASTARGYLDTAKKRSTLTIVTHALTDKVLFEGKRAVGVRYLIGAAEERVEARARKEVLVCSGAIASPQLLQRSGVGPAKLLESLDIPVVHDLPGVGENLQDHLELYLQYACTQPVSLYPSLLWYNQPAIGAEWLFNGTGIGASNQFEAGGFIRSRPEFDWPNIQYHFLPVAINYNGSNGVKEHGFQAHMGSMRSPSRGRVQLKSKNPRDYPSILFNYMATEQDWQEFRDGIRLTREIMQQPALDPYRGREISPGIDVQTDEQLDKFIREHAETAFHPSCSCKMGTDEMAVVDGEGRVHGMQGLRVVDASIMPIITTGNLNAPTIMIAEKIADKIRGRQPLPRSTADYYVAGDAPVRGKPLREVGPTAQ.

6–35 (DYIIVGAGSAGNTLATRLTEDEGVTVLLLE) is an FAD binding site. Catalysis depends on His475, which acts as the Proton acceptor.

The protein belongs to the GMC oxidoreductase family. FAD serves as cofactor.

It carries out the reaction choline + A = betaine aldehyde + AH2. The enzyme catalyses betaine aldehyde + NAD(+) + H2O = glycine betaine + NADH + 2 H(+). Its pathway is amine and polyamine biosynthesis; betaine biosynthesis via choline pathway; betaine aldehyde from choline (cytochrome c reductase route): step 1/1. Functionally, involved in the biosynthesis of the osmoprotectant glycine betaine. Catalyzes the oxidation of choline to betaine aldehyde and betaine aldehyde to glycine betaine at the same rate. The sequence is that of Oxygen-dependent choline dehydrogenase from Pseudomonas fluorescens (strain SBW25).